We begin with the raw amino-acid sequence, 649 residues long: Glucan endo-1,3-beta-glucosidase btgC (649 aa).

Disordered regions lie at residues 1 to 50 and 110 to 224; these read MGDR…AHTH and YHTT…AGGA. Residues 1–274 lie on the Cytoplasmic side of the membrane; the sequence is MGDRSEQYGD…PRPSGASRKR (274 aa). Positions 144–157 are enriched in low complexity; it reads GSSAALSAAGAPAG. Over residues 198–208 the composition is skewed to acidic residues; it reads NPDDILDDGDD. Residues 275–295 traverse the membrane as a helical; Signal-anchor for type II membrane protein segment; it reads GWIIGGILAFIVIGAIVGGAV. Residues 296–649 lie on the Extracellular side of the membrane; sequence GGTLGNRRSE…IPDCGGKTAA (354 aa). The segment at 301–329 is disordered; sequence NRRSETASESSEVSADDDTETNGDLDKNS. The span at 314-323 shows a compositional bias: acidic residues; sequence SADDDTETNG. N-linked (GlcNAc...) asparagine glycosylation is found at N369, N392, and N420. E452 (proton donor) is an active-site residue. E551 serves as the catalytic Nucleophile. An N-linked (GlcNAc...) asparagine glycan is attached at N596.

This sequence belongs to the glycosyl hydrolase 17 family.

Its subcellular location is the cell membrane. The enzyme catalyses Hydrolysis of (1-&gt;3)-beta-D-glucosidic linkages in (1-&gt;3)-beta-D-glucans.. Its function is as follows. Glucanases play a role in cell expansion during growth, in cell-cell fusion during mating, and in spore release during sporulation. This enzyme may be involved in beta-glucan degradation. Active on laminarin and lichenan. The protein is Glucan endo-1,3-beta-glucosidase btgC (btgC) of Emericella nidulans (strain FGSC A4 / ATCC 38163 / CBS 112.46 / NRRL 194 / M139) (Aspergillus nidulans).